The following is a 294-amino-acid chain: Acetyl-coenzyme A carboxylase carboxyl transferase subunit beta (294 aa).

Residues 25–294 (IWTKCDNCGQ…PKVDYRHCVE (270 aa)) enclose the CoA carboxyltransferase N-terminal domain. Positions 29, 32, 48, and 51 each coordinate Zn(2+). Residues 29–51 (CDNCGQLLYKKELERNLEVCPKC) form a C4-type zinc finger.

It belongs to the AccD/PCCB family. As to quaternary structure, acetyl-CoA carboxylase is a heterohexamer composed of biotin carboxyl carrier protein (AccB), biotin carboxylase (AccC) and two subunits each of ACCase subunit alpha (AccA) and ACCase subunit beta (AccD). It depends on Zn(2+) as a cofactor.

It is found in the cytoplasm. The enzyme catalyses N(6)-carboxybiotinyl-L-lysyl-[protein] + acetyl-CoA = N(6)-biotinyl-L-lysyl-[protein] + malonyl-CoA. The protein operates within lipid metabolism; malonyl-CoA biosynthesis; malonyl-CoA from acetyl-CoA: step 1/1. Component of the acetyl coenzyme A carboxylase (ACC) complex. Biotin carboxylase (BC) catalyzes the carboxylation of biotin on its carrier protein (BCCP) and then the CO(2) group is transferred by the transcarboxylase to acetyl-CoA to form malonyl-CoA. The sequence is that of Acetyl-coenzyme A carboxylase carboxyl transferase subunit beta from Blochmanniella pennsylvanica (strain BPEN).